The chain runs to 167 residues: Calcium-binding protein CML19 (167 aa).

4 EF-hand domains span residues 23-58, 59-94, 96-131, and 132-167; these read QKRR…LGFE, MNNQ…KFGE, DSID…LGEN, and FTDN…TSYG. Positions 36, 38, 40, 42, 47, 72, 74, 76, 83, 109, 111, 113, 115, 120, 145, 147, 149, 151, and 156 each coordinate Ca(2+).

Belongs to the centrin family. Interacts with RAD4. Calcium is required for this interaction. Interacts with SAC3B. As to expression, expressed in leaves, roots, and at lower level in stems. Barely detectable in flower buds and flowers.

It localises to the cytoplasm. The protein localises to the nucleus. Potential calcium sensor that binds calcium in vitro. Modulates homologous recombination and nucleotide excision repair (NER). Involved in the early response to UV irradiation. This chain is Calcium-binding protein CML19, found in Arabidopsis thaliana (Mouse-ear cress).